Reading from the N-terminus, the 296-residue chain is Lipoyl synthase (296 aa).

[4Fe-4S] cluster-binding residues include Cys35, Cys40, Cys46, Cys61, Cys65, Cys68, and Ser274. Residues Trp47 to Leu263 enclose the Radical SAM core domain.

It belongs to the radical SAM superfamily. Lipoyl synthase family. Requires [4Fe-4S] cluster as cofactor.

The protein localises to the cytoplasm. The enzyme catalyses [[Fe-S] cluster scaffold protein carrying a second [4Fe-4S](2+) cluster] + N(6)-octanoyl-L-lysyl-[protein] + 2 oxidized [2Fe-2S]-[ferredoxin] + 2 S-adenosyl-L-methionine + 4 H(+) = [[Fe-S] cluster scaffold protein] + N(6)-[(R)-dihydrolipoyl]-L-lysyl-[protein] + 4 Fe(3+) + 2 hydrogen sulfide + 2 5'-deoxyadenosine + 2 L-methionine + 2 reduced [2Fe-2S]-[ferredoxin]. The protein operates within protein modification; protein lipoylation via endogenous pathway; protein N(6)-(lipoyl)lysine from octanoyl-[acyl-carrier-protein]: step 2/2. Its function is as follows. Catalyzes the radical-mediated insertion of two sulfur atoms into the C-6 and C-8 positions of the octanoyl moiety bound to the lipoyl domains of lipoate-dependent enzymes, thereby converting the octanoylated domains into lipoylated derivatives. This chain is Lipoyl synthase, found in Neorickettsia sennetsu (strain ATCC VR-367 / Miyayama) (Ehrlichia sennetsu).